The primary structure comprises 223 residues: Adenylate kinase (223 aa).

17-22 (GAGKGT) serves as a coordination point for ATP. Residues 37 to 66 (STGDMLRSQVAKGTPLGVEAKKIMDQGGLV) form an NMP region. AMP-binding positions include threonine 38, arginine 43, 64–66 (GLV), 93–96 (GFPR), and glutamine 100. Positions 134–171 (GRLVHPSSGRSYHKLFNPPKVEMTDDVTGEPLVQRSDD) are LID. Residues arginine 135 and 144–145 (SY) each bind ATP. Positions 168 and 179 each coordinate AMP. Residue glutamine 207 participates in ATP binding.

Belongs to the adenylate kinase family. AK2 subfamily. Monomer.

Its subcellular location is the cytoplasm. It is found in the cytosol. The protein resides in the mitochondrion intermembrane space. It carries out the reaction AMP + ATP = 2 ADP. Its function is as follows. Catalyzes the reversible transfer of the terminal phosphate group between ATP and AMP. Plays an important role in cellular energy homeostasis and in adenine nucleotide metabolism. Adenylate kinase activity is critical for regulation of the phosphate utilization and the AMP de novo biosynthesis pathways. This Vanderwaltozyma polyspora (strain ATCC 22028 / DSM 70294 / BCRC 21397 / CBS 2163 / NBRC 10782 / NRRL Y-8283 / UCD 57-17) (Kluyveromyces polysporus) protein is Adenylate kinase.